The following is a 137-amino-acid chain: Large ribosomal subunit protein uL16 (137 aa).

The protein belongs to the universal ribosomal protein uL16 family. In terms of assembly, part of the 50S ribosomal subunit.

Binds 23S rRNA and is also seen to make contacts with the A and possibly P site tRNAs. This chain is Large ribosomal subunit protein uL16, found in Francisella tularensis subsp. tularensis (strain FSC 198).